A 634-amino-acid polypeptide reads, in one-letter code: Extracellular metalloproteinase MEP (634 aa).

Residues 1 to 18 (MRGLLLAGALALPASVFA) form the signal peptide. The propeptide occupies 19 to 245 (HPAHQSYGLN…IHGVVDYVAE (227 aa)). H429 lines the Zn(2+) pocket. E430 is a catalytic residue. Position 433 (H433) interacts with Zn(2+).

The protein belongs to the peptidase M36 family. Requires Zn(2+) as cofactor.

It localises to the secreted. In terms of biological role, secreted metalloproteinase that allows assimilation of proteinaceous substrates and probably acts as a virulence factor. This is Extracellular metalloproteinase MEP (MEP) from Neosartorya fischeri (strain ATCC 1020 / DSM 3700 / CBS 544.65 / FGSC A1164 / JCM 1740 / NRRL 181 / WB 181) (Aspergillus fischerianus).